Consider the following 274-residue polypeptide: 2,3,4,5-tetrahydropyridine-2,6-dicarboxylate N-succinyltransferase (274 aa).

The protein belongs to the transferase hexapeptide repeat family.

Its subcellular location is the cytoplasm. The enzyme catalyses (S)-2,3,4,5-tetrahydrodipicolinate + succinyl-CoA + H2O = (S)-2-succinylamino-6-oxoheptanedioate + CoA. It participates in amino-acid biosynthesis; L-lysine biosynthesis via DAP pathway; LL-2,6-diaminopimelate from (S)-tetrahydrodipicolinate (succinylase route): step 1/3. In Yersinia pseudotuberculosis serotype IB (strain PB1/+), this protein is 2,3,4,5-tetrahydropyridine-2,6-dicarboxylate N-succinyltransferase.